A 373-amino-acid chain; its full sequence is 8-amino-7-oxononanoate synthase (373 aa).

Residue R16 participates in substrate binding. 93–94 provides a ligand contact to pyridoxal 5'-phosphate; that stretch reads GF. A substrate-binding site is contributed by H118. Pyridoxal 5'-phosphate contacts are provided by residues S165, 190 to 193, and 222 to 225; these read DEAH and TFSK. K225 is modified (N6-(pyridoxal phosphate)lysine). T334 is a substrate binding site.

This sequence belongs to the class-II pyridoxal-phosphate-dependent aminotransferase family. BioF subfamily. As to quaternary structure, homodimer. Pyridoxal 5'-phosphate is required as a cofactor.

It catalyses the reaction 6-carboxyhexanoyl-[ACP] + L-alanine + H(+) = (8S)-8-amino-7-oxononanoate + holo-[ACP] + CO2. It participates in cofactor biosynthesis; biotin biosynthesis. Its function is as follows. Catalyzes the decarboxylative condensation of pimeloyl-[acyl-carrier protein] and L-alanine to produce 8-amino-7-oxononanoate (AON), [acyl-carrier protein], and carbon dioxide. The chain is 8-amino-7-oxononanoate synthase from Helicobacter pylori (strain ATCC 700392 / 26695) (Campylobacter pylori).